The primary structure comprises 292 residues: Retinal homeobox protein Rx3 (292 aa).

The interval 1 to 27 (MRLVGSQYKDMEDRLSPSARLVRSPGS) is disordered. The Octapeptide motif signature appears at 32–39 (HSIESILG). 2 disordered regions span residues 53–72 (GSGK…DSNK) and 85–107 (SPDL…KKHR). Basic and acidic residues-rich tracts occupy residues 57 to 72 (TGKD…DSNK) and 92 to 102 (DGGKLSDDENP). The homeobox DNA-binding region spans 106 to 165 (HRRNRTTFTTFQLHELERAFEKSHYPDVYSREELALKVNLPEVRVQVWFQNRRAKWRRQE). The short motif at 272–285 (TSIASLRMKAKEHI) is the OAR element. The Nuclear localization signal signature appears at 278–282 (RMKAK).

It belongs to the paired homeobox family. Bicoid subfamily.

It localises to the nucleus. Plays a critical role in eye formation by regulating the initial specification of retinal cells and/or their subsequent proliferation. This is Retinal homeobox protein Rx3 (rx3) from Danio rerio (Zebrafish).